The primary structure comprises 517 residues: Dermokine (517 aa).

Residues 1–21 (MKLQGSLACLLLALCLGGGAA) form the signal peptide. Disordered stretches follow at residues 51-83 (VGQG…MGSR) and 123-364 (AGSW…IQKE). Composition is skewed to gly residues over residues 127–145 (GTSG…GVQG) and 167–176 (GSVGQGGNGG). The segment covering 197–206 (RGNNQNSGCT) has biased composition (polar residues). Low complexity predominate over residues 212–235 (GSHESFSNSGGSSNDGSRGSQGSH). A compositionally biased stretch (gly residues) spans 236 to 250 (GSNGQGSSGRGGGQG). Positions 251–289 (NSDNNGSSSSSSGSNSGNSNSGNSGNSNSGNSGNSGSGS) are enriched in low complexity. Composition is skewed to gly residues over residues 308-332 (GSRG…GGGN) and 347-358 (GGSGSQGHGSNG).

It belongs to the dermokine family. Homooligomer. Seems to be able to homodimerize and homotrimerize. O-glycosylated. As to expression, highly expressed in stratified epithelia; such as the skin, tongue, esophagus, forestomach and vagina. Also found in lung, trachea and urinary bladder.

It is found in the secreted. In terms of biological role, may act as a soluble regulator of keratinocyte differentiation. The sequence is that of Dermokine (Dmkn) from Mus musculus (Mouse).